We begin with the raw amino-acid sequence, 512 residues long: ATP synthase subunit alpha (512 aa).

169–176 contacts ATP; sequence GDRQTGKT.

It belongs to the ATPase alpha/beta chains family. F-type ATPases have 2 components, CF(1) - the catalytic core - and CF(0) - the membrane proton channel. CF(1) has five subunits: alpha(3), beta(3), gamma(1), delta(1), epsilon(1). CF(0) has three main subunits: a(1), b(2) and c(9-12). The alpha and beta chains form an alternating ring which encloses part of the gamma chain. CF(1) is attached to CF(0) by a central stalk formed by the gamma and epsilon chains, while a peripheral stalk is formed by the delta and b chains.

It localises to the cell inner membrane. The catalysed reaction is ATP + H2O + 4 H(+)(in) = ADP + phosphate + 5 H(+)(out). Produces ATP from ADP in the presence of a proton gradient across the membrane. The alpha chain is a regulatory subunit. The chain is ATP synthase subunit alpha from Leptothrix cholodnii (strain ATCC 51168 / LMG 8142 / SP-6) (Leptothrix discophora (strain SP-6)).